A 334-amino-acid chain; its full sequence is Fructose-1,6-bisphosphatase class 1 (334 aa).

The Mg(2+) site is built by E89, D112, L114, and D115. Substrate is bound by residues 115 to 118 (DGSS), N208, Y241, and K271. Residue E277 coordinates Mg(2+).

This sequence belongs to the FBPase class 1 family. Homotetramer. Mg(2+) is required as a cofactor.

The protein resides in the cytoplasm. The enzyme catalyses beta-D-fructose 1,6-bisphosphate + H2O = beta-D-fructose 6-phosphate + phosphate. The protein operates within carbohydrate biosynthesis; gluconeogenesis. The protein is Fructose-1,6-bisphosphatase class 1 of Serratia proteamaculans (strain 568).